We begin with the raw amino-acid sequence, 278 residues long: MIVNNTPVETYELNGVPILVKREDLCAPLPGPSFSKIRGVVAHIKNRPETTIGCLDTYHSKAGWAVAYVCQQLGKQAVDYWPRFKRDGAADAPRVQQQHARQLGADLVDIPAGRSAILYHTAKKHLRENYHDSYLMPNALKLPESITENAAEAVRTAPHLPDSGTLVISISSGTVAAGVLKGFEEAGLLRNYNVILHMGYSRSQDATREYIEKAAGLTLGDRIKFIDEGYGYADAARDASAPFPCNPFYDLKAWKWLSNPTNLETILDGPIVFWNIGE.

This sequence belongs to the pyridoxal-phosphate-dependent aminodecarboxylase family.

It catalyses the reaction 5-C(alpha)-glycyl-dTMP in DNA + H(+) = 5-aminoethyl-dUMP in DNA + CO2. Converts 5-Calpha-glycinylthymidine (Calpha-GlyT) into 5-aminoethyl-2'-deoxyuridine (5-NedU) as a step in the pathway leading to thymidine hypermodifications in the viral genome. As a final result of the pathway of hypermodification, 5-aminoethyl-2'-deoxyuridine (5-NedU) substitutes for about 30% of thymidines in the viral DNA. These modifications probably prevent degradation of viral genome by the host restriction-modification antiviral defense system. The protein is Glycyl-dTMP PLP-dependent decarboxylase of Pseudomonas aeruginosa.